The following is a 546-amino-acid chain: Probable protein kinase UbiB (546 aa).

One can recognise a Protein kinase domain in the interval 124-502 (DFDIKPLASA…RVRQGQSRYL (379 aa)). ATP contacts are provided by residues 130-138 (LASASIAQV) and Lys153. Asp288 (proton acceptor) is an active-site residue. Helical transmembrane passes span 501–521 (YLFGIGATLLLSGTLLLINRP) and 522–542 (DWQMMPAWLMAGGLVVWLIGW).

Belongs to the ABC1 family. UbiB subfamily.

The protein resides in the cell inner membrane. The protein operates within cofactor biosynthesis; ubiquinone biosynthesis [regulation]. Is probably a protein kinase regulator of UbiI activity which is involved in aerobic coenzyme Q (ubiquinone) biosynthesis. The polypeptide is Probable protein kinase UbiB (Enterobacter sp. (strain 638)).